The primary structure comprises 598 residues: Ecto-NOX disulfide-thiol exchanger 2 (598 aa).

In terms of domain architecture, RRM spans 99–178; sequence KTVFVGGLPE…GRLHVDFAQA (80 aa). 2 coiled-coil regions span residues 264–299 and 352–476; these read IQSANSHVRRLVNEKATHEKEMEEAKEKFKQALSGI and RREE…KQEN.

Belongs to the ENOX family. It depends on Cu cation as a cofactor. Glycosylated.

The protein resides in the cell membrane. It is found in the secreted. It localises to the extracellular space. Its activity is regulated as follows. Inhibited by the antitumor sulfonylurea LY181984, the vabilloid capsaicin, and retinoids. Its function is as follows. May be involved in cell growth. Probably acts as a terminal oxidase of plasma electron transport from cytosolic NAD(P)H via hydroquinones to acceptors at the cell surface. Hydroquinone oxidase activity alternates with a protein disulfide-thiol interchange/oxidoreductase activity which may control physical membrane displacements associated with vesicle budding or cell enlargement. The activities oscillate with a period length of 22 minutes and play a role in control of the ultradian cellular biological clock. The sequence is that of Ecto-NOX disulfide-thiol exchanger 2 (Enox2) from Mus musculus (Mouse).